The primary structure comprises 282 residues: PAK4-inhibitor INKA1 (282 aa).

Disordered regions lie at residues 21–50 (RDTG…QFRA) and 92–127 (GFSE…FSVS). Inka box regions lie at residues 163 to 200 (EAED…ELPE) and 256 to 282 (PADI…VSYL).

The protein belongs to the INKA family. As to quaternary structure, interacts with PAK4. Expressed in tissues of the developing head during neurulation.

Its subcellular location is the nucleus. It is found in the cytoplasm. In terms of biological role, inhibitor of the serine/threonine-protein kinase PAK4. Acts by binding PAK4 in a substrate-like manner, inhibiting the protein kinase activity. This is PAK4-inhibitor INKA1 from Mus musculus (Mouse).